Here is a 58-residue protein sequence, read N- to C-terminus: Light-harvesting protein B-870 alpha chain (58 aa).

At 1–15 the chain is on the cytoplasmic side; it reads MSKFYKIWLVFDPRR. Residues 16 to 36 traverse the membrane as a helical segment; sequence VFVAQGVFLFLLAVLIHLILL. Histidine 32 contacts a bacteriochlorophyll. Over 37-58 the chain is Periplasmic; sequence STPAFNWLTVATAKHGYVAAAQ.

This sequence belongs to the antenna complex alpha subunit family. As to quaternary structure, the core complex is formed by different alpha and beta chains, binding bacteriochlorophyll molecules, and arranged most probably in tetrameric structures disposed around the reaction center. The non-pigmented gamma chains may constitute additional components.

It localises to the cell inner membrane. Its function is as follows. Antenna complexes are light-harvesting systems, which transfer the excitation energy to the reaction centers. This Rhodobacter capsulatus (Rhodopseudomonas capsulata) protein is Light-harvesting protein B-870 alpha chain (pufA).